A 70-amino-acid chain; its full sequence is Large ribosomal subunit protein uL29 (70 aa).

Belongs to the universal ribosomal protein uL29 family.

The sequence is that of Large ribosomal subunit protein uL29 (rpl29) from Methanocaldococcus jannaschii (strain ATCC 43067 / DSM 2661 / JAL-1 / JCM 10045 / NBRC 100440) (Methanococcus jannaschii).